The following is a 96-amino-acid chain: Large ribosomal subunit protein eL21 (96 aa).

The segment at 1–22 (MRKSKGFKSRSRYKLKRSIRPK) is disordered.

The protein belongs to the eukaryotic ribosomal protein eL21 family.

The chain is Large ribosomal subunit protein eL21 from Methanosphaera stadtmanae (strain ATCC 43021 / DSM 3091 / JCM 11832 / MCB-3).